A 333-amino-acid chain; its full sequence is GTPase Obg (333 aa).

In terms of domain architecture, Obg spans 4–162; sequence GNFVDYVKIY…MDVILELKVL (159 aa). Positions 163 to 332 constitute an OBG-type G domain; that stretch reads ADVGLVGFPN…LKDKLWKMLN (170 aa). GTP-binding positions include 169–176, 194–198, 216–219, 283–286, and 313–315; these read GFPNAGKS, FTTLK, DIPG, SKCD, and SSV. Residues Ser176 and Thr196 each coordinate Mg(2+).

The protein belongs to the TRAFAC class OBG-HflX-like GTPase superfamily. OBG GTPase family. As to quaternary structure, monomer. The cofactor is Mg(2+).

Its subcellular location is the cytoplasm. Functionally, an essential GTPase which binds GTP, GDP and possibly (p)ppGpp with moderate affinity, with high nucleotide exchange rates and a fairly low GTP hydrolysis rate. Plays a role in control of the cell cycle, stress response, ribosome biogenesis and in those bacteria that undergo differentiation, in morphogenesis control. In Flavobacterium johnsoniae (strain ATCC 17061 / DSM 2064 / JCM 8514 / BCRC 14874 / CCUG 350202 / NBRC 14942 / NCIMB 11054 / UW101) (Cytophaga johnsonae), this protein is GTPase Obg.